Here is a 243-residue protein sequence, read N- to C-terminus: Uridylate kinase (243 aa).

ATP is bound at residue 12–15 (KLSG). An involved in allosteric activation by GTP region spans residues 20 to 25 (GPGGSG). Glycine 56 is a binding site for UMP. Glycine 57 and arginine 61 together coordinate ATP. Residues aspartate 76 and 137-144 (TGSPYFST) contribute to the UMP site. ATP-binding residues include asparagine 165, tyrosine 171, and aspartate 174.

It belongs to the UMP kinase family. In terms of assembly, homohexamer.

It is found in the cytoplasm. The catalysed reaction is UMP + ATP = UDP + ADP. It functions in the pathway pyrimidine metabolism; CTP biosynthesis via de novo pathway; UDP from UMP (UMPK route): step 1/1. Allosterically activated by GTP. Inhibited by UTP. Catalyzes the reversible phosphorylation of UMP to UDP. The protein is Uridylate kinase of Oenococcus oeni (strain ATCC BAA-331 / PSU-1).